The primary structure comprises 350 residues: Bifunctional methylenetetrahydrofolate dehydrogenase/cyclohydrolase, mitochondrial (350 aa).

The N-terminal 35 residues, 1–35, are a transit peptide targeting the mitochondrion; the sequence is MAATSLMSALAARLLQPAHSCSLRLRPFHLAAVRN. Lys-50 carries the post-translational modification N6-acetyllysine; alternate. Lys-50 participates in a covalent cross-link: Glycyl lysine isopeptide (Lys-Gly) (interchain with G-Cter in SUMO2); alternate. Residues 84–88 and 131–133 contribute to the substrate site; these read YVLNK and VQL. NAD(+)-binding positions include 200–202 and Arg-233; that span reads GRS. 309 to 313 serves as a coordination point for substrate; it reads PGGVG.

Belongs to the tetrahydrofolate dehydrogenase/cyclohydrolase family. In terms of assembly, homodimer. Requires Mg(2+) as cofactor.

It is found in the mitochondrion. It carries out the reaction (6R)-5,10-methylene-5,6,7,8-tetrahydrofolate + NAD(+) = (6R)-5,10-methenyltetrahydrofolate + NADH. The catalysed reaction is (6R)-5,10-methenyltetrahydrofolate + H2O = (6R)-10-formyltetrahydrofolate + H(+). In terms of biological role, although its dehydrogenase activity is NAD-specific, it can also utilize NADP at a reduced efficiency. The protein is Bifunctional methylenetetrahydrofolate dehydrogenase/cyclohydrolase, mitochondrial (MTHFD2) of Homo sapiens (Human).